Reading from the N-terminus, the 508-residue chain is Glycerol kinase (508 aa).

Position 14 (T14) interacts with ADP. The ATP site is built by T14, T15, and S16. T14 is a binding site for sn-glycerol 3-phosphate. An ADP-binding site is contributed by R18. Sn-glycerol 3-phosphate contacts are provided by R84, E85, and Y136. Glycerol-binding residues include R84, E85, and Y136. H232 carries the post-translational modification Phosphohistidine; by HPr. Residue D246 participates in sn-glycerol 3-phosphate binding. Glycerol-binding residues include D246 and Q247. Positions 268 and 311 each coordinate ADP. Residues T268, G311, Q315, and G412 each coordinate ATP. G412 and N416 together coordinate ADP.

Belongs to the FGGY kinase family. As to quaternary structure, homotetramer and homodimer (in equilibrium). The phosphoenolpyruvate-dependent sugar phosphotransferase system (PTS), including enzyme I, and histidine-containing protein (HPr) are required for the phosphorylation, which leads to the activation of the enzyme.

It carries out the reaction glycerol + ATP = sn-glycerol 3-phosphate + ADP + H(+). Its pathway is polyol metabolism; glycerol degradation via glycerol kinase pathway; sn-glycerol 3-phosphate from glycerol: step 1/1. With respect to regulation, activated by phosphorylation and inhibited by fructose 1,6-bisphosphate (FBP). In terms of biological role, key enzyme in the regulation of glycerol uptake and metabolism. Catalyzes the phosphorylation of glycerol to yield sn-glycerol 3-phosphate. This is Glycerol kinase from Streptococcus pyogenes serotype M3 (strain ATCC BAA-595 / MGAS315).